A 586-amino-acid chain; its full sequence is A-type ATP synthase subunit A (586 aa).

232–239 (GPFGSGKT) is a binding site for ATP.

The protein belongs to the ATPase alpha/beta chains family. As to quaternary structure, has multiple subunits with at least A(3), B(3), C, D, E, F, H, I and proteolipid K(x).

It localises to the cell membrane. It carries out the reaction ATP + H2O + 4 H(+)(in) = ADP + phosphate + 5 H(+)(out). In terms of biological role, component of the A-type ATP synthase that produces ATP from ADP in the presence of a proton gradient across the membrane. The A chain is the catalytic subunit. This chain is A-type ATP synthase subunit A, found in Methanococcus maripaludis (strain C5 / ATCC BAA-1333).